A 299-amino-acid chain; its full sequence is 4-diphosphocytidyl-2-C-methyl-D-erythritol kinase (299 aa).

Lys20 is an active-site residue. Residue 106 to 116 (PMGGGLGGGSS) coordinates ATP. Asp148 is an active-site residue.

Belongs to the GHMP kinase family. IspE subfamily. Homodimer.

The catalysed reaction is 4-CDP-2-C-methyl-D-erythritol + ATP = 4-CDP-2-C-methyl-D-erythritol 2-phosphate + ADP + H(+). It participates in isoprenoid biosynthesis; isopentenyl diphosphate biosynthesis via DXP pathway; isopentenyl diphosphate from 1-deoxy-D-xylulose 5-phosphate: step 3/6. In terms of biological role, catalyzes the phosphorylation of the position 2 hydroxy group of 4-diphosphocytidyl-2C-methyl-D-erythritol. This Yersinia pseudotuberculosis serotype O:1b (strain IP 31758) protein is 4-diphosphocytidyl-2-C-methyl-D-erythritol kinase.